Consider the following 116-residue polypeptide: Iron-sulfur cluster insertion protein ErpA (116 aa).

Iron-sulfur cluster is bound by residues cysteine 44, cysteine 108, and cysteine 110.

Belongs to the HesB/IscA family. As to quaternary structure, homodimer. Iron-sulfur cluster serves as cofactor.

Required for insertion of 4Fe-4S clusters for at least IspG. This Pseudomonas fluorescens (strain Pf0-1) protein is Iron-sulfur cluster insertion protein ErpA.